A 1349-amino-acid chain; its full sequence is Zinc finger protein 804B (1349 aa).

A C2H2-type zinc finger spans residues 55–79 (FYCELCDKQYHKHQEFDNHINSYDH). The disordered stretch occupies residues 985 to 1010 (YASESRNDQDSAIPRTTEKDKSKSSH).

The sequence is that of Zinc finger protein 804B (ZNF804B) from Homo sapiens (Human).